The primary structure comprises 162 residues: UPF0305 protein MmarC5_0909 (162 aa).

It belongs to the UPF0305 family.

This is UPF0305 protein MmarC5_0909 from Methanococcus maripaludis (strain C5 / ATCC BAA-1333).